The chain runs to 144 residues: MRLNTLSPAAGSKPSKKRVGRGIGSGLGKTGGRGHKGQKSRSGGSVRPGFEGGQMPLKQRLPKFGFTSRKSLVSAEVRLAELAKVTGDVVDLNSLKAANVITKNIEFVKIVLSGDLSKAVTVKGLRVTKGAKAAIEAAGGKIEE.

The tract at residues 1–58 (MRLNTLSPAAGSKPSKKRVGRGIGSGLGKTGGRGHKGQKSRSGGSVRPGFEGGQMPLK) is disordered. Gly residues predominate over residues 21-31 (RGIGSGLGKTG).

It belongs to the universal ribosomal protein uL15 family. As to quaternary structure, part of the 50S ribosomal subunit.

Functionally, binds to the 23S rRNA. The polypeptide is Large ribosomal subunit protein uL15 (Vibrio atlanticus (strain LGP32) (Vibrio splendidus (strain Mel32))).